The following is a 252-amino-acid chain: Geranylgeranylglyceryl phosphate synthase (252 aa).

Mg(2+)-binding residues include Asp27 and Ser56. Residues 175–181 (YLEAGSG), 206–207 (GG), and 228–229 (GT) contribute to the sn-glycerol 1-phosphate site.

The protein belongs to the GGGP/HepGP synthase family. Group II subfamily. Mg(2+) serves as cofactor.

It localises to the cytoplasm. It catalyses the reaction sn-glycerol 1-phosphate + (2E,6E,10E)-geranylgeranyl diphosphate = sn-3-O-(geranylgeranyl)glycerol 1-phosphate + diphosphate. Its pathway is membrane lipid metabolism; glycerophospholipid metabolism. Functionally, prenyltransferase that catalyzes the transfer of the geranylgeranyl moiety of geranylgeranyl diphosphate (GGPP) to the C3 hydroxyl of sn-glycerol-1-phosphate (G1P). This reaction is the first ether-bond-formation step in the biosynthesis of archaeal membrane lipids. This Pyrococcus abyssi (strain GE5 / Orsay) protein is Geranylgeranylglyceryl phosphate synthase.